The primary structure comprises 240 residues: Adapter protein MecA (240 aa).

The interval 118 to 138 is disordered; the sequence is EQRAQQQKHSHKSEQKQTKQR.

It belongs to the MecA family. As to quaternary structure, homodimer.

Functionally, enables the recognition and targeting of unfolded and aggregated proteins to the ClpC protease or to other proteins involved in proteolysis. The protein is Adapter protein MecA of Staphylococcus haemolyticus (strain JCSC1435).